Here is a 111-residue protein sequence, read N- to C-terminus: 2Fe-2S ferredoxin (111 aa).

Residues 5–107 (IKVTFVINNG…GIKVRLPSAT (103 aa)) form the 2Fe-2S ferredoxin-type domain. The [2Fe-2S] cluster site is built by Cys42, Cys48, Cys51, and Cys88.

The protein belongs to the adrenodoxin/putidaredoxin family. It depends on [2Fe-2S] cluster as a cofactor.

Its function is as follows. Ferredoxin are iron-sulfur proteins that transfer electrons in a wide variety of metabolic reactions. This Rickettsia bellii (strain RML369-C) protein is 2Fe-2S ferredoxin (fdxB).